A 353-amino-acid polypeptide reads, in one-letter code: Holliday junction branch migration complex subunit RuvB (353 aa).

Residues 1 to 182 (MPERLITPKG…FGIVQRLEFY (182 aa)) form a large ATPase domain (RuvB-L) region. Residues I21, R22, G63, K66, T67, T68, 129–131 (EDF), R172, Y182, and R219 contribute to the ATP site. T67 serves as a coordination point for Mg(2+). The interval 183 to 253 (NVQDLTRIVQ…VADRALDLLD (71 aa)) is small ATPAse domain (RuvB-S). The segment at 256 to 353 (VQGFDAQDRR…QEEGGGEGKL (98 aa)) is head domain (RuvB-H). 3 residues coordinate DNA: R292, R311, and R316.

Belongs to the RuvB family. In terms of assembly, homohexamer. Forms an RuvA(8)-RuvB(12)-Holliday junction (HJ) complex. HJ DNA is sandwiched between 2 RuvA tetramers; dsDNA enters through RuvA and exits via RuvB. An RuvB hexamer assembles on each DNA strand where it exits the tetramer. Each RuvB hexamer is contacted by two RuvA subunits (via domain III) on 2 adjacent RuvB subunits; this complex drives branch migration. In the full resolvosome a probable DNA-RuvA(4)-RuvB(12)-RuvC(2) complex forms which resolves the HJ.

The protein localises to the cytoplasm. It carries out the reaction ATP + H2O = ADP + phosphate + H(+). Its function is as follows. The RuvA-RuvB-RuvC complex processes Holliday junction (HJ) DNA during genetic recombination and DNA repair, while the RuvA-RuvB complex plays an important role in the rescue of blocked DNA replication forks via replication fork reversal (RFR). RuvA specifically binds to HJ cruciform DNA, conferring on it an open structure. The RuvB hexamer acts as an ATP-dependent pump, pulling dsDNA into and through the RuvAB complex. RuvB forms 2 homohexamers on either side of HJ DNA bound by 1 or 2 RuvA tetramers; 4 subunits per hexamer contact DNA at a time. Coordinated motions by a converter formed by DNA-disengaged RuvB subunits stimulates ATP hydrolysis and nucleotide exchange. Immobilization of the converter enables RuvB to convert the ATP-contained energy into a lever motion, pulling 2 nucleotides of DNA out of the RuvA tetramer per ATP hydrolyzed, thus driving DNA branch migration. The RuvB motors rotate together with the DNA substrate, which together with the progressing nucleotide cycle form the mechanistic basis for DNA recombination by continuous HJ branch migration. Branch migration allows RuvC to scan DNA until it finds its consensus sequence, where it cleaves and resolves cruciform DNA. This Thioalkalivibrio sulfidiphilus (strain HL-EbGR7) protein is Holliday junction branch migration complex subunit RuvB.